The sequence spans 500 residues: Probable cytosol aminopeptidase (500 aa).

Residues Lys264 and Asp269 each contribute to the Mn(2+) site. Residue Lys276 is part of the active site. Mn(2+) is bound by residues Asp287, Asp346, and Glu348. Arg350 is an active-site residue.

Belongs to the peptidase M17 family. The cofactor is Mn(2+).

It is found in the cytoplasm. The enzyme catalyses Release of an N-terminal amino acid, Xaa-|-Yaa-, in which Xaa is preferably Leu, but may be other amino acids including Pro although not Arg or Lys, and Yaa may be Pro. Amino acid amides and methyl esters are also readily hydrolyzed, but rates on arylamides are exceedingly low.. It carries out the reaction Release of an N-terminal amino acid, preferentially leucine, but not glutamic or aspartic acids.. Functionally, presumably involved in the processing and regular turnover of intracellular proteins. Catalyzes the removal of unsubstituted N-terminal amino acids from various peptides. The polypeptide is Probable cytosol aminopeptidase (Nitrobacter winogradskyi (strain ATCC 25391 / DSM 10237 / CIP 104748 / NCIMB 11846 / Nb-255)).